A 147-amino-acid polypeptide reads, in one-letter code: SsrA-binding protein (147 aa).

The tract at residues 124 to 147 (KKHDKRQDIKDRDWARKQARQDFS) is disordered. Over residues 128 to 147 (KRQDIKDRDWARKQARQDFS) the composition is skewed to basic and acidic residues.

Belongs to the SmpB family.

It is found in the cytoplasm. Its function is as follows. Required for rescue of stalled ribosomes mediated by trans-translation. Binds to transfer-messenger RNA (tmRNA), required for stable association of tmRNA with ribosomes. tmRNA and SmpB together mimic tRNA shape, replacing the anticodon stem-loop with SmpB. tmRNA is encoded by the ssrA gene; the 2 termini fold to resemble tRNA(Ala) and it encodes a 'tag peptide', a short internal open reading frame. During trans-translation Ala-aminoacylated tmRNA acts like a tRNA, entering the A-site of stalled ribosomes, displacing the stalled mRNA. The ribosome then switches to translate the ORF on the tmRNA; the nascent peptide is terminated with the 'tag peptide' encoded by the tmRNA and targeted for degradation. The ribosome is freed to recommence translation, which seems to be the essential function of trans-translation. The chain is SsrA-binding protein from Neorickettsia sennetsu (strain ATCC VR-367 / Miyayama) (Ehrlichia sennetsu).